Here is a 434-residue protein sequence, read N- to C-terminus: A-adding tRNA nucleotidyltransferase (434 aa).

ATP is bound at residue 20–23; sequence GAVR. Residues D33 and D35 each coordinate Mg(2+). ATP contacts are provided by residues 91–92, N96, 132–141, and R177; these read RD and DPLRAWRAAR. The 113-residue stretch at 227–339 folds into the HD domain; that stretch reads VFEHGVEALH…ELLPDLLSLM (113 aa).

The protein belongs to the tRNA nucleotidyltransferase/poly(A) polymerase family. Requires Mg(2+) as cofactor.

It carries out the reaction a tRNA with a 3' CC end + ATP = a tRNA with a 3' CCA end + diphosphate. In terms of biological role, tRNA nucleotidyltransferase involved in the synthesis of the tRNA CCA terminus. Adds the terminal adenosine residue to tRNA. The chain is A-adding tRNA nucleotidyltransferase from Deinococcus radiodurans (strain ATCC 13939 / DSM 20539 / JCM 16871 / CCUG 27074 / LMG 4051 / NBRC 15346 / NCIMB 9279 / VKM B-1422 / R1).